A 58-amino-acid polypeptide reads, in one-letter code: Cholecystokinins (58 aa).

Tyr52 is subject to Sulfotyrosine. A Phenylalanine amide modification is found at Phe58.

This sequence belongs to the gastrin/cholecystokinin family. Binds to CCK-A receptors in the pancreas and CCK-B receptors in the brain. cholecystokinin 8 binds CCK-A receptors more potently than cholecystokinin 58, cholecystokinin 8 and cholecystokinin 58 bind CCK-B receptors with equal affinity. The precursor is cleaved by proteases to produce a number of active cholecystokinins. Post-translationally, cholecystokinin 58 occurs in both sulfated (CCK58(s)) and nonsulfated (CCK58(ns)) forms, which differ in their receptor-binding activities. CCK58(s) binds to the CCK-A receptor with high affinity, CCK58(ns) binds poorly to the CCK-A receptor. CCK58(s) and CCK58(ns) both bind the CCK-B receptor. In terms of processing, the precursor is cleaved by ACE, which removes the Gly-Arg-Arg peptide at the C-terminus, leading to mature hormone.

Its subcellular location is the secreted. Functionally, this peptide hormone induces gall bladder contraction and the release of pancreatic enzymes in the gut. Its function in the brain is not clear. Binding to CCK-A receptors stimulates amylase release from the pancreas, binding to CCK-B receptors stimulates gastric acid secretion. cholecystokinin 58 and cholecystokinin 8, but not cholecystokinin 58 desnonopeptide, stimulate amylase release from the pancreas. cholecystokinin 58, but not cholecystokinin 8, increases bile-pancreatic volume. The sequence is that of Cholecystokinins from Canis lupus familiaris (Dog).